The following is a 112-amino-acid chain: Large ribosomal subunit protein uL22 (112 aa).

It belongs to the universal ribosomal protein uL22 family. In terms of assembly, part of the 50S ribosomal subunit.

This protein binds specifically to 23S rRNA; its binding is stimulated by other ribosomal proteins, e.g. L4, L17, and L20. It is important during the early stages of 50S assembly. It makes multiple contacts with different domains of the 23S rRNA in the assembled 50S subunit and ribosome. Functionally, the globular domain of the protein is located near the polypeptide exit tunnel on the outside of the subunit, while an extended beta-hairpin is found that lines the wall of the exit tunnel in the center of the 70S ribosome. In Nitratidesulfovibrio vulgaris (strain DSM 19637 / Miyazaki F) (Desulfovibrio vulgaris), this protein is Large ribosomal subunit protein uL22.